Consider the following 111-residue polypeptide: FK506-binding protein 1 (111 aa).

The tract at residues 1 to 20 (MGVEKTIITQGSGPSPQVGQ) is disordered. The segment covering 7 to 20 (IITQGSGPSPQVGQ) has biased composition (polar residues). In terms of domain architecture, PPIase FKBP-type spans 19–111 (GQKVTMEYTG…IFDVELKKIG (93 aa)).

It belongs to the FKBP-type PPIase family. FKBP1 subfamily.

It is found in the cytoplasm. It carries out the reaction [protein]-peptidylproline (omega=180) = [protein]-peptidylproline (omega=0). Its activity is regulated as follows. Inhibited by both FK506 and rapamycin. In terms of biological role, PPIases accelerate the folding of proteins. It catalyzes the cis-trans isomerization of proline imidic peptide bonds in oligopeptides. This chain is FK506-binding protein 1 (FPR1), found in Gibberella zeae (strain ATCC MYA-4620 / CBS 123657 / FGSC 9075 / NRRL 31084 / PH-1) (Wheat head blight fungus).